The primary structure comprises 475 residues: Ribulose bisphosphate carboxylase large chain (475 aa).

Positions 1 to 2 are excised as a propeptide; it reads MS. Pro-3 carries the N-acetylproline modification. Residue Lys-14 is modified to N6,N6,N6-trimethyllysine. Residues Asn-123 and Thr-173 each contribute to the substrate site. Lys-175 functions as the Proton acceptor in the catalytic mechanism. Position 177 (Lys-177) interacts with substrate. Residues Lys-201, Asp-203, and Glu-204 each coordinate Mg(2+). Residue Lys-201 is modified to N6-carboxylysine. His-294 (proton acceptor) is an active-site residue. Substrate-binding residues include Arg-295, His-327, and Ser-379.

It belongs to the RuBisCO large chain family. Type I subfamily. As to quaternary structure, heterohexadecamer of 8 large chains and 8 small chains; disulfide-linked. The disulfide link is formed within the large subunit homodimers. Mg(2+) is required as a cofactor. In terms of processing, the disulfide bond which can form in the large chain dimeric partners within the hexadecamer appears to be associated with oxidative stress and protein turnover.

Its subcellular location is the plastid. The protein resides in the chloroplast. The catalysed reaction is 2 (2R)-3-phosphoglycerate + 2 H(+) = D-ribulose 1,5-bisphosphate + CO2 + H2O. It carries out the reaction D-ribulose 1,5-bisphosphate + O2 = 2-phosphoglycolate + (2R)-3-phosphoglycerate + 2 H(+). Its function is as follows. RuBisCO catalyzes two reactions: the carboxylation of D-ribulose 1,5-bisphosphate, the primary event in carbon dioxide fixation, as well as the oxidative fragmentation of the pentose substrate in the photorespiration process. Both reactions occur simultaneously and in competition at the same active site. This chain is Ribulose bisphosphate carboxylase large chain, found in Gossypium hirsutum (Upland cotton).